Here is a 499-residue protein sequence, read N- to C-terminus: Endosomal/lysosomal proton channel TMEM175 (499 aa).

The Cytoplasmic portion of the chain corresponds to 1–30 (MSRLQTEEQAVDSEGDSSLHRRNEEGTQSS). Positions 1–30 (MSRLQTEEQAVDSEGDSSLHRRNEEGTQSS) are disordered. Residue T6 is modified to Phosphothreonine. A helical membrane pass occupies residues 31–53 (HRMLGFSDALLSIIATVMILPVT). The short motif at 32 to 38 (RMLGFSD) is the RxxxFSD motif 1 element. Residues 54–74 (HTEISPEQQFDKSIQKLLATR) are Lumenal-facing. Residues 55 to 60 (TEISPE) form a short helix H1-1 region. The tract at residues 62-68 (QFDKSIQ) is short helix H2-1. The chain crosses the membrane as a helical span at residues 75–97 (IAVYLMTFLIVTVAWTAHTRLFQ). Over 98–103 (VVGKID) the chain is Cytoplasmic. Residues 104–125 (DTLALLNLACMMTITLLPYTFS) traverse the membrane as a helical segment. Residues 126–135 (LMVTFPDVPL) are Lumenal-facing. Residues 136–157 (GIFLFCVCVIAIGSVQAMIVGY) traverse the membrane as a helical segment. Residues 158 to 181 (AFHFPHLLNPQIQCSTHRDLSRRH) are Cytoplasmic-facing. The chain crosses the membrane as a helical span at residues 182–202 (ILHLVLRGPALCFVAAVFSLF). At 203–207 (FFPLS) the chain is on the lumenal side. The helical transmembrane segment at 208-227 (YLLMVTVIFLPHISKATTWC) threads the bilayer. At 228–254 (KDKLMGQRESPAHDMEPFSIDLHAPLS) the chain is on the cytoplasmic side. A helical transmembrane segment spans residues 255 to 279 (KERVEAFSDGVYAIVATLLILDICE). Positions 257–263 (RVEAFSD) match the RxxxFSD motif 2 motif. Topologically, residues 280 to 306 (DNVPDPKDVQEKFSGSLVAALGAYGPQ) are lumenal. The tract at residues 285-293 (PKDVQEKFS) is short helix H1-2. Positions 295–301 (SLVAALG) are short helix H2-2. Residues 307-329 (FLAYFGSFATVGLLWFAHHSLFL) traverse the membrane as a helical segment. The Cytoplasmic portion of the chain corresponds to 330–335 (HVRKAT). A helical transmembrane segment spans residues 336–357 (QTMGLLNILSLAFVGGLPLAYQ). Residues 358 to 372 (QTSAFARQPHDELER) lie on the Lumenal side of the membrane. A helical transmembrane segment spans residues 373 to 393 (VRVSCAIIFFASIFQFAIWTT). Topologically, residues 394-413 (ALLHQTETLQPAVQFGGQEH) are cytoplasmic. Residues 414–437 (AFMFAKLALYPCASLLAFAATCLL) form a helical membrane-spanning segment. The Lumenal segment spans residues 438-439 (SR). The chain crosses the membrane as a helical span at residues 440–466 (FSTAIFHLMQISVPFAFLLLRLLVRLA). Residues 467-499 (LAGLQVLRGLWPHHPQQDQSEPEAQSQLLPDPC) lie on the Cytoplasmic side of the membrane.

This sequence belongs to the TMEM175 family. In terms of assembly, homodimer. Interacts with AKT (AKT1, AKT2 or AKT3); leading to formation of the lysoK(GF) complex, which activates the channel. Interacts with LAMP1; inhibiting the proton channel activity of TMEM175. Interacts with LAMP2; inhibiting the proton channel activity of TMEM175.

The protein resides in the endosome membrane. Its subcellular location is the lysosome membrane. The catalysed reaction is H(+)(in) = H(+)(out). It carries out the reaction K(+)(in) = K(+)(out). Active at low pH (under pH 4.6): proton channel activity is activated by luminal side protons. Polyunsaturated fatty acids, such as arachidonic acid, also activate the channel activity. Proton channel activity is directly inhibited by LAMP1 or LAMP2, facilitating lysosomal acidification. Channel activity is activated following interaction with AKT (AKT1, AKT2 or AKT3): interaction promotes activation from closed to an open state. Activation by AKT is independent of AKT serine/threonine-protein kinase activity. Its function is as follows. Proton-activated proton channel that catalyzes proton efflux from endosomes and lysosomes to maintain a steady-state pH. Activated at low pH (under pH 4.6) by luminal side protons: selectively mediates lysosomal proton release from lysosomes, eliciting a proton leak that balances V-ATPase activity to maintain pH homeostasis. Regulation of lumenal pH stability is required for autophagosome-lysosome fusion. Also acts as a potassium channel at higher pH, regulating potassium conductance in endosomes and lysosomes. Constitutes the pore-forming subunit of the lysoK(GF) complex, a complex activated by extracellular growth factors. The lysoK(GF) complex is composed of TMEM175 and AKT (AKT1, AKT2 or AKT3), a major target of growth factor receptors: in the complex, TMEM175 channel is opened by conformational changes by AKT, leading to its activation. The lysoK(GF) complex is required to protect neurons against stress-induced damage. The sequence is that of Endosomal/lysosomal proton channel TMEM175 from Mus musculus (Mouse).